Reading from the N-terminus, the 386-residue chain is ATP synthase gamma chain 2, chloroplastic (386 aa).

Residues 1-22 (MTGSISTSWLLSSPSNSNSASS) form a disordered region. The N-terminal 60 residues, 1 to 60 (MTGSISTSWLLSSPSNSNSASSSESYSFIATLKPVRYYPFQSLTPNRISSRSPLPSIQIR), are a transit peptide targeting the chloroplast. C149 is a catalytic residue. C260 and C266 form a disulfide bridge.

It belongs to the ATPase gamma chain family. As to quaternary structure, F-type ATPases have 2 components, CF(1) - the catalytic core - and CF(0) - the membrane proton channel. CF(1) has five subunits: alpha(3), beta(3), gamma(1), delta(1), epsilon(1). CF(0) has four main subunits: a, b, b' and c.

The protein localises to the plastid. The protein resides in the chloroplast thylakoid membrane. Functionally, produces ATP from ADP in the presence of a proton gradient across the membrane. The gamma chain is believed to be important in regulating ATPase activity and the flow of protons through the CF(0) complex. This Arabidopsis thaliana (Mouse-ear cress) protein is ATP synthase gamma chain 2, chloroplastic (ATPC2).